A 588-amino-acid polypeptide reads, in one-letter code: Glutathione/L-cysteine transport system ATP-binding/permease protein CydD (588 aa).

The Cytoplasmic portion of the chain corresponds to 1-15 (MNKSRQKELTRWLKQ). The next 2 helical transmembrane spans lie at 16-36 (QSVISQRWLNISRLLGFVSGI) and 37-57 (LIIAQAWFMARILQHMIMENI). In terms of domain architecture, ABC transmembrane type-1 spans 20-306 (SQRWLNISRL…APEFFQPLRD (287 aa)). At 58–136 (PREALLLPFT…LEQIDDMHDY (79 aa)) the chain is on the cytoplasmic side. Residues 137-157 (YARYLPQMALAVSVPLLIVVA) form a helical membrane-spanning segment. The Periplasmic segment spans residues 158 to 161 (IFPS). Residues 162-182 (NWAAALILLGTAPLIPLFMAL) traverse the membrane as a helical segment. Over 183–249 (VGMGAADANR…MEVLRLAFLS (67 aa)) the chain is Cytoplasmic. The chain crosses the membrane as a helical span at residues 250–270 (SGILEFFTSLSIALVAVYFGF). Residues 271 to 276 (SYLGEL) are Periplasmic-facing. A helical membrane pass occupies residues 277–297 (DFGHYDTGVTLAAGFLALILA). Topologically, residues 298 to 573 (PEFFQPLRDL…QGRYAELSVA (276 aa)) are cytoplasmic. In terms of domain architecture, ABC transporter spans 339 to 572 (EAELASTDPV…EQGRYAELSV (234 aa)). 373 to 380 (LPAGQRAV) is a binding site for ATP.

The protein belongs to the ABC transporter superfamily. Cysteine exporter (TC 3.A.1.129.1) family. In terms of assembly, forms a heterodimer with CydC.

The protein localises to the cell inner membrane. The enzyme catalyses L-cysteine(in) + ATP + H2O = L-cysteine(out) + ADP + phosphate + H(+). The catalysed reaction is glutathione(in) + ATP + H2O = glutathione(out) + ADP + phosphate + H(+). ATPase activity is stimulated by various thiol compounds. The presence of heme leads to a further enhancement of thiol-stimulated ATPase activity, although a large excess of heme inhibits activity. Glutathione transport is inhibited by sodium orthovanadate, an inhibitor of ABC-type transport systems, but not by the proton ionophore carbonyl cyanide m-chlorophenylhydrazone (CCCP). In terms of biological role, part of the ABC transporter complex CydDC that exports the reduced low-molecular-weight thiols cysteine and glutathione to the periplasm. Export of these thiol-containing redox-active molecules may be crucial for redox homeostasis in the periplasm, permitting correct assembly of various respiratory complexes and formation of correct disulfide bonds in periplasmic and secreted proteins. CydD contains transmembrane domains (TMD), which form a pore in the inner membrane, and an ATP-binding domain (NBD), which is responsible for energy generation. Required for the assembly of functional cytochrome bd-type quinol oxidases and periplasmic c-type cytochromes. Overexpression of CydDC under anaerobic conditions also results in the formation of a heme biosynthesis-derived pigment, P-574. CydDC binds heme b, but heme is probably not transported by the complex and instead has a role in regulating ATPase activity. Functionally, conversely, a more recent study suggests an alternative function of CydDC: authors suggest that CydDC does not mediate the export of L-cysteine but rather reduces cytoplasmic L-cystine to L-cysteine. The principle function of CydDC would be to maintain the reduced state of cytoplasmic L-cysteine, thereby providing an important connection between sulfur metabolism, oxidative stress and resistance to antibiotics. In Escherichia coli (strain K12), this protein is Glutathione/L-cysteine transport system ATP-binding/permease protein CydD.